Here is a 318-residue protein sequence, read N- to C-terminus: UDP-3-O-acylglucosamine N-acyltransferase 1 (318 aa).

H230 functions as the Proton acceptor in the catalytic mechanism.

This sequence belongs to the transferase hexapeptide repeat family. LpxD subfamily. As to quaternary structure, homotrimer.

It carries out the reaction a UDP-3-O-[(3R)-3-hydroxyacyl]-alpha-D-glucosamine + a (3R)-hydroxyacyl-[ACP] = a UDP-2-N,3-O-bis[(3R)-3-hydroxyacyl]-alpha-D-glucosamine + holo-[ACP] + H(+). It functions in the pathway bacterial outer membrane biogenesis; LPS lipid A biosynthesis. Functionally, catalyzes the N-acylation of UDP-3-O-acylglucosamine using 3-hydroxyacyl-ACP as the acyl donor. Is involved in the biosynthesis of lipid A, a phosphorylated glycolipid that anchors the lipopolysaccharide to the outer membrane of the cell. In Sulfurimonas denitrificans (strain ATCC 33889 / DSM 1251) (Thiomicrospira denitrificans (strain ATCC 33889 / DSM 1251)), this protein is UDP-3-O-acylglucosamine N-acyltransferase 1.